Reading from the N-terminus, the 384-residue chain is MEGVSATMHKLRPYLLMIFLQFGAAGTYIVIMATLNQGQNRYVVIVYRNLVAALVLAPFALIFERKVRPKMTLSVLWKIMALGFLEPVLDQGFGYLGMNMTSATYTSAIMNILPSVTFIIAWILRMEKVNIAEVRSKAKIIGTLVGLGGALVMTLYKGPLIPLPWSNPNMDQQNGHTNNSQDHNNWVVGTLLILLGCVAWSGFYVLQSITIKTYPADLSLSALICLAGAVQSFAVALVVERHPSGWAVGWDARLFAPLYTGIVSSGITYYVQGMVMKTRGPVFVTAFNPLCMILVALIASFILHEQIHFGCVIGGAVIAAGLYMVVWGKGKDYEVSGLDILEKNSLQELPITTKSEDDNKLVSSISDNSNVTIPGGAHSNTSGI.

10 consecutive transmembrane segments (helical) span residues Leu15–Leu35, Val43–Phe63, Leu73–Phe93, Thr104–Leu124, Ile140–Leu160, Trp186–Leu206, Ser219–Val239, Phe255–Val275, Val282–Ile302, and Ile307–Trp327. 2 consecutive EamA domains span residues Ala25–Thr154 and Val198–Val326.

It belongs to the drug/metabolite transporter (DMT) superfamily. Plant drug/metabolite exporter (P-DME) (TC 2.A.7.4) family.

It localises to the membrane. This chain is WAT1-related protein At4g08290, found in Arabidopsis thaliana (Mouse-ear cress).